Consider the following 193-residue polypeptide: tRNA (cytidine(56)-2'-O)-methyltransferase (193 aa).

S-adenosyl-L-methionine-binding positions include leucine 86 and 115–119; that span reads GGEKV.

The protein belongs to the aTrm56 family. As to quaternary structure, homodimer.

It is found in the cytoplasm. It carries out the reaction cytidine(56) in tRNA + S-adenosyl-L-methionine = 2'-O-methylcytidine(56) in tRNA + S-adenosyl-L-homocysteine + H(+). Specifically catalyzes the AdoMet-dependent 2'-O-ribose methylation of cytidine at position 56 in tRNAs. In Haloquadratum walsbyi (strain DSM 16790 / HBSQ001), this protein is tRNA (cytidine(56)-2'-O)-methyltransferase.